The sequence spans 126 residues: Aspartate 1-decarboxylase (126 aa).

The Schiff-base intermediate with substrate; via pyruvic acid role is filled by serine 25. Serine 25 carries the post-translational modification Pyruvic acid (Ser). A substrate-binding site is contributed by threonine 57. The Proton donor role is filled by tyrosine 58. 73 to 75 (GAA) is a substrate binding site.

It belongs to the PanD family. In terms of assembly, heterooctamer of four alpha and four beta subunits. Pyruvate is required as a cofactor. Post-translationally, is synthesized initially as an inactive proenzyme, which is activated by self-cleavage at a specific serine bond to produce a beta-subunit with a hydroxyl group at its C-terminus and an alpha-subunit with a pyruvoyl group at its N-terminus.

The protein localises to the cytoplasm. It catalyses the reaction L-aspartate + H(+) = beta-alanine + CO2. It functions in the pathway cofactor biosynthesis; (R)-pantothenate biosynthesis; beta-alanine from L-aspartate: step 1/1. Catalyzes the pyruvoyl-dependent decarboxylation of aspartate to produce beta-alanine. In Edwardsiella ictaluri (strain 93-146), this protein is Aspartate 1-decarboxylase.